The sequence spans 119 residues: Parathyroid hormone (119 aa).

The N-terminal stretch at 1–25 is a signal peptide; it reads MTSTKNLAKAIVILYAICFFTNSDG. Residues 26–31 constitute a propeptide that is removed on maturation; that stretch reads RPMMKR.

It belongs to the parathyroid hormone family. In terms of assembly, interacts with PTH1R (via N-terminal extracellular domain).

It localises to the secreted. Parathyroid hormone elevates calcium level by dissolving the salts in bone and preventing their renal excretion. Acts by binding to its receptor, PTH1R, activating G protein-coupled receptor signaling. Stimulates [1-14C]-2-deoxy-D-glucose (2DG) transport and glycogen synthesis in osteoblastic cells. The sequence is that of Parathyroid hormone from Gallus gallus (Chicken).